Reading from the N-terminus, the 134-residue chain is Large ribosomal subunit protein uL18 (134 aa).

The interval 1 to 25 (MSNTAQNEKRLPVGKDISTRRRTAR) is disordered. Residues 7–19 (NEKRLPVGKDIST) are compositionally biased toward basic and acidic residues.

It belongs to the universal ribosomal protein uL18 family. In terms of assembly, part of the 50S ribosomal subunit; part of the 5S rRNA/L5/L18/L25 subcomplex. Contacts the 5S and 23S rRNAs.

This is one of the proteins that bind and probably mediate the attachment of the 5S RNA into the large ribosomal subunit, where it forms part of the central protuberance. This is Large ribosomal subunit protein uL18 from Corynebacterium jeikeium (strain K411).